The following is a 301-amino-acid chain: MQVLRTPDERFEGLADWPFAPKYVQVKDADGTLLRIHHVDEGPRDGAPVLLMHGEPSWAYLYRHIIPRLVAAGHRAIAPDLVGFGRSDKPADRGDYTYARHVAWMSAWLEAVDLRGAYLFCQDWGGLIGLRLVAAYPERFAGVVVSNTGLPVGGGAMTDGFKAWLQFSQTVPELPIGFLLNGGSVRELSAAEMAAYDAPFPDESYKEGARQFPALVPVTSEHAGVAENQAAWKVLEAWDKPLVTAFSDGDPITKGGEVPFRERVPGARGQPHVTLHGGHFVQEDSPAEIAGLLDGLIRRSR.

The active-site Nucleophile is the Asp-123. Asp-250 serves as the catalytic Proton donor. His-279 functions as the Proton acceptor in the catalytic mechanism.

Belongs to the haloalkane dehalogenase family. Type 1 subfamily. Monomer.

It carries out the reaction 1-haloalkane + H2O = a halide anion + a primary alcohol + H(+). Catalyzes hydrolytic cleavage of carbon-halogen bonds in halogenated aliphatic compounds, leading to the formation of the corresponding primary alcohols, halide ions and protons. This is Haloalkane dehalogenase from Phenylobacterium zucineum (strain HLK1).